The primary structure comprises 586 residues: Axin-like protein pry-1 (586 aa).

The segment at 1 to 135 (METHLGWARS…FIEAFNKMSS (135 aa)) is required for interaction with apr-1. Residues 10-131 (SLEAVLSDRS…GSEEFIEAFN (122 aa)) form the RGS domain. Disordered regions lie at residues 137–168 (TADQLPGGSAHHSSHQNTMRRSSGTTSRKSAA), 344–442 (MTDD…DSFA), and 478–501 (TSSLDYKDRRQHRKAPTPKKHSKI). 2 stretches are compositionally biased toward polar residues: residues 151–168 (HQNTMRRSSGTTSRKSAA) and 368–388 (GEGSKNTTLSPTNRAPAQLHN). Residues 421–442 (SQSMCAPSYSSASSSYSRDSFA) are compositionally biased toward low complexity. Basic residues predominate over residues 486 to 501 (RRQHRKAPTPKKHSKI). The 82-residue stretch at 505 to 586 (LSNLITISYL…FEGRIAAELR (82 aa)) folds into the DIX domain.

Interacts (via N-terminus) with apr-1 (via C-terminus). Interacts with bar-1 (via ARM repeats), gsk-3, and mig-5. In terms of tissue distribution, expressed in hypodermal cells (seam cells) V5 and V6, Q neuroblasts, ventral hypodermal cells P7/8 to P11/12, body wall muscle cells and neurons in the head, the tail and the ventral nerve cord.

It localises to the cell membrane. It is found in the nucleus. The protein resides in the cytoplasm. Its subcellular location is the cell cortex. Works in parallel with axl-1 in negatively regulating bar-1 signaling in vulval precursor cells and Q neuroblasts. Inhibits Wnt signaling, which affects tissue specific expression of Hox genes, egl-5, lin-39 and mab-5. This in turn affects QR (postembryonic neuroblast) cell migration, vulval cell fate specification, and the development of sensory structures by the seam cell lineage. Has a role in alae V cell patterning, ray formation in the male tail and axon guidance. Does not affect B cell polarity. The polypeptide is Axin-like protein pry-1 (Caenorhabditis elegans).